The primary structure comprises 382 residues: Homoserine O-acetyltransferase (382 aa).

The region spanning 50–360 (NAVLICHALT…DKGHDAFLLD (311 aa)) is the AB hydrolase-1 domain. The Nucleophile role is filled by Ser155. Residue Arg225 participates in substrate binding. Catalysis depends on residues Asp321 and His354. Asp355 contacts substrate.

Belongs to the AB hydrolase superfamily. MetX family. As to quaternary structure, homodimer.

Its subcellular location is the cytoplasm. It catalyses the reaction L-homoserine + acetyl-CoA = O-acetyl-L-homoserine + CoA. It participates in amino-acid biosynthesis; L-methionine biosynthesis via de novo pathway; O-acetyl-L-homoserine from L-homoserine: step 1/1. Transfers an acetyl group from acetyl-CoA to L-homoserine, forming acetyl-L-homoserine. This Caulobacter vibrioides (strain ATCC 19089 / CIP 103742 / CB 15) (Caulobacter crescentus) protein is Homoserine O-acetyltransferase.